Here is a 193-residue protein sequence, read N- to C-terminus: Ion-translocating oxidoreductase complex subunit A (193 aa).

6 consecutive transmembrane segments (helical) span residues 4–24 (LALI…KFLG), 38–58 (AMGM…CSYL), 65–85 (APLG…AVVV), 102–122 (VLGI…VALL), 134–154 (AVYG…FAAL), and 171–191 (SVAL…AGLV).

It belongs to the NqrDE/RnfAE family. The complex is composed of six subunits: RnfA, RnfB, RnfC, RnfD, RnfE and RnfG.

Its subcellular location is the cell inner membrane. Its function is as follows. Part of a membrane-bound complex that couples electron transfer with translocation of ions across the membrane. This is Ion-translocating oxidoreductase complex subunit A from Alkalilimnicola ehrlichii (strain ATCC BAA-1101 / DSM 17681 / MLHE-1).